The sequence spans 215 residues: Cardiolipin synthase (CMP-forming) (215 aa).

Transmembrane regions (helical) follow at residues 29–49 (IPNILSMARLAGVPLFLWLIL), 60–80 (GWALLVLALSGVSDYLDGKLA), 117–137 (LWLTLVLLAREAMLLVMVGIL), 158–178 (LMYAFPLLLLSDGSGWIASLA), and 179–199 (AVFGWAFAGWGTTLYWWAGVL).

Belongs to the CDP-alcohol phosphatidyltransferase class-I family. A divalent metal cation is required as a cofactor.

The protein localises to the cell membrane. It carries out the reaction a CDP-1,2-diacyl-sn-glycerol + a 1,2-diacyl-sn-glycero-3-phospho-(1'-sn-glycerol) = a cardiolipin + CMP + H(+). Its function is as follows. Catalyzes the synthesis of cardiolipin (CL) (diphosphatidylglycerol) by specifically transferring a phosphatidyl group from CDP-diacylglycerol to phosphatidylglycerol (PG). This chain is Cardiolipin synthase (CMP-forming), found in Streptomyces coelicolor (strain ATCC BAA-471 / A3(2) / M145).